A 544-amino-acid polypeptide reads, in one-letter code: CTP synthase (544 aa).

An amidoligase domain region spans residues 1 to 266; that stretch reads MKKRFIFITG…DQIICHHFKL (266 aa). Position 14 (Ser-14) interacts with CTP. Residue Ser-14 participates in UTP binding. ATP contacts are provided by residues 15–20 and Asp-72; that span reads SLGKGI. Mg(2+) is bound by residues Asp-72 and Glu-140. CTP-binding positions include 147–149, 187–192, and Lys-223; these read DIE and KTKPTQ. Residues 187-192 and Lys-223 each bind UTP; that span reads KTKPTQ. Residues 291–541 form the Glutamine amidotransferase type-1 domain; sequence TIGIIGKYIK…IKAAIQYKKI (251 aa). Position 352 (Gly-352) interacts with L-glutamine. The active-site Nucleophile; for glutamine hydrolysis is the Cys-379. L-glutamine-binding positions include 380-383, Glu-403, and Arg-469; that span reads LGMQ. Active-site residues include His-514 and Glu-516.

It belongs to the CTP synthase family. As to quaternary structure, homotetramer.

It carries out the reaction UTP + L-glutamine + ATP + H2O = CTP + L-glutamate + ADP + phosphate + 2 H(+). It catalyses the reaction L-glutamine + H2O = L-glutamate + NH4(+). The enzyme catalyses UTP + NH4(+) + ATP = CTP + ADP + phosphate + 2 H(+). It participates in pyrimidine metabolism; CTP biosynthesis via de novo pathway; CTP from UDP: step 2/2. Allosterically activated by GTP, when glutamine is the substrate; GTP has no effect on the reaction when ammonia is the substrate. The allosteric effector GTP functions by stabilizing the protein conformation that binds the tetrahedral intermediate(s) formed during glutamine hydrolysis. Inhibited by the product CTP, via allosteric rather than competitive inhibition. Catalyzes the ATP-dependent amination of UTP to CTP with either L-glutamine or ammonia as the source of nitrogen. Regulates intracellular CTP levels through interactions with the four ribonucleotide triphosphates. In Buchnera aphidicola subsp. Baizongia pistaciae (strain Bp), this protein is CTP synthase.